Here is a 280-residue protein sequence, read N- to C-terminus: Beta carbonic anhydrase 4 (280 aa).

At alanine 2 the chain carries N-acetylalanine. A coiled-coil region spans residues 47–76 (NVAAAKIKALTAELKELDSSNSDAIERIKT). Threonine 57 carries the phosphothreonine modification. Serine 117 is subject to Phosphoserine. Cysteine 223 is modified (S-nitrosocysteine).

It belongs to the beta-class carbonic anhydrase family. As to quaternary structure, interacts with DTX56. In terms of tissue distribution, strongly expressed in aerial tissues including leaves, stems, flowers and siliques. Accumulates in both guard cells and mesophyll cells.

Its subcellular location is the cell membrane. The enzyme catalyses hydrogencarbonate + H(+) = CO2 + H2O. In terms of biological role, reversible hydration of carbon dioxide. Together with BCA1, involved in the CO(2) signaling pathway which controls gas-exchange between plants and the atmosphere by modulating stomatal development and movements. Promotes water use efficiency. The polypeptide is Beta carbonic anhydrase 4 (Arabidopsis thaliana (Mouse-ear cress)).